A 245-amino-acid polypeptide reads, in one-letter code: MTFTASSSSCAITESPVVVALDYHERDKALAFVDKIDPRDCRLKVGKEMFTLFGPQLVRDLQQRGFDVFLDLKFHDIPNTTARAVAAAADLGVWMVNVHASGGARMMAAARDALAPFGKDAPLLIAVTVLTSMETSDLHDLGVTLSPAEHAERLARLTQQCGLDGVVCSAQEAVRFKQAFGAAFKLVTPGIRPAGSEAGDQRRIMTPEQALSAGVDYMVIGRPVTQSVDPAQTLKDINASLKREA.

Substrate contacts are provided by residues D22, K44, 71–80 (DLKFHDIPNT), T131, R192, Q201, G221, and R222. Catalysis depends on K73, which acts as the Proton donor.

Belongs to the OMP decarboxylase family. Type 1 subfamily. In terms of assembly, homodimer.

The enzyme catalyses orotidine 5'-phosphate + H(+) = UMP + CO2. The protein operates within pyrimidine metabolism; UMP biosynthesis via de novo pathway; UMP from orotate: step 2/2. In terms of biological role, catalyzes the decarboxylation of orotidine 5'-monophosphate (OMP) to uridine 5'-monophosphate (UMP). This chain is Orotidine 5'-phosphate decarboxylase, found in Salmonella gallinarum (strain 287/91 / NCTC 13346).